The chain runs to 402 residues: MSDVKKVVLAYSGGLDTSVILQWLRETYDCEVVTFTADLGQGEELEPARKKAEAFGIKEIYIDDLREEFVRDFVFPMFRANAIYEGEYLLGTSIARPLIAKRQVEIARETGADAVSHGATGKGNDQVRFELGYYGLEPNIKVIAPWREWDLNSREKLLAYAEKHGISIEGKQSGGSPYSMDANLLHISYEGGVLEDTWTECEEAMWRWTRSPEAAPDEAQYIDIEFQGGDPVSIDGEKLSPAALLSRLNDLGAMHGVGRIDIVENRYVGMKSRGCYETPGGTILLRAHRAIESITLDRESAHLKDEVMPKYAELIYNGYWWSPEREAMQALIDATQRRVNGVVRLKLYKGNVIVVGRDSANDSLFDQTIATFEDDRGAYDQKDAEGFIRLNALRLRIAQRRG.

ATP is bound by residues 10-18 (AYSGGLDTS) and Ala37. 2 residues coordinate L-citrulline: Tyr88 and Ser93. Position 118 (Gly118) interacts with ATP. Residues Thr120, Asn124, and Asp125 each coordinate L-aspartate. Position 124 (Asn124) interacts with L-citrulline. 5 residues coordinate L-citrulline: Arg128, Ser179, Ser188, Glu264, and Tyr276.

This sequence belongs to the argininosuccinate synthase family. Type 1 subfamily. In terms of assembly, homotetramer.

It localises to the cytoplasm. It carries out the reaction L-citrulline + L-aspartate + ATP = 2-(N(omega)-L-arginino)succinate + AMP + diphosphate + H(+). Its pathway is amino-acid biosynthesis; L-arginine biosynthesis; L-arginine from L-ornithine and carbamoyl phosphate: step 2/3. The chain is Argininosuccinate synthase from Alkalilimnicola ehrlichii (strain ATCC BAA-1101 / DSM 17681 / MLHE-1).